A 194-amino-acid chain; its full sequence is Homing endonuclease I-DmoI (194 aa).

The 134-residue stretch at 14–147 folds into the DOD-type homing endonuclease domain; sequence LLGLIIGDGG…VSRWLNNLGV (134 aa). Active-site residues include Asp21 and Glu117.

A divalent metal cation serves as cofactor.

Endonuclease involved in intron homing. Recognizes DNA in the 23S rRNA gene intron (minimally 5'-CCGGGTAAGTTCCGG-3'), cutting after A-8 on the top and C-11 on the bottom strand. Has a slow turnover rate, cuts the coding strand with a slight preference over the non-coding strand. The polypeptide is Homing endonuclease I-DmoI (Desulfurococcus mucosus (Desulfurococcus mobilis)).